A 366-amino-acid polypeptide reads, in one-letter code: NADP-dependent oxidoreductase domain-containing protein 1 (366 aa).

Belongs to the pyrroline-5-carboxylate reductase family.

Functionally, probable oxidoreductase. This is NADP-dependent oxidoreductase domain-containing protein 1 (Noxred1) from Mus musculus (Mouse).